Reading from the N-terminus, the 446-residue chain is Tubulin beta-1 chain (446 aa).

GTP contacts are provided by Q13, E71, S140, G144, T145, G146, N206, and N228. E71 contributes to the Mg(2+) binding site. The disordered stretch occupies residues 421-446 (VSEYQQYQDASADDGEEYEEDAPMEE). Over residues 431–446 (SADDGEEYEEDAPMEE) the composition is skewed to acidic residues.

This sequence belongs to the tubulin family. As to quaternary structure, dimer of alpha and beta chains. A typical microtubule is a hollow water-filled tube with an outer diameter of 25 nm and an inner diameter of 15 nM. Alpha-beta heterodimers associate head-to-tail to form protofilaments running lengthwise along the microtubule wall with the beta-tubulin subunit facing the microtubule plus end conferring a structural polarity. Microtubules usually have 13 protofilaments but different protofilament numbers can be found in some organisms and specialized cells. The cofactor is Mg(2+).

The protein resides in the cytoplasm. Its subcellular location is the cytoskeleton. Functionally, tubulin is the major constituent of microtubules, a cylinder consisting of laterally associated linear protofilaments composed of alpha- and beta-tubulin heterodimers. Microtubules grow by the addition of GTP-tubulin dimers to the microtubule end, where a stabilizing cap forms. Below the cap, tubulin dimers are in GDP-bound state, owing to GTPase activity of alpha-tubulin. In Hypocrea rufa (Trichoderma viride), this protein is Tubulin beta-1 chain (tub1).